The following is a 435-amino-acid chain: Ribosomal protein uS12 methylthiotransferase RimO (435 aa).

An MTTase N-terminal domain is found at 3–113; the sequence is HKVGFVSLGC…VVNAVHQYLP (111 aa). 6 residues coordinate [4Fe-4S] cluster: C12, C48, C77, C144, C148, and C151. The Radical SAM core domain maps to 130–367; sequence LTPRHYAYLK…MQVQAEISRN (238 aa). Residues 370 to 435 enclose the TRAM domain; the sequence is KNKIGSTQTV…DDYDLYASLV (66 aa).

It belongs to the methylthiotransferase family. RimO subfamily. Requires [4Fe-4S] cluster as cofactor.

The protein localises to the cytoplasm. The catalysed reaction is L-aspartate(89)-[ribosomal protein uS12]-hydrogen + (sulfur carrier)-SH + AH2 + 2 S-adenosyl-L-methionine = 3-methylsulfanyl-L-aspartate(89)-[ribosomal protein uS12]-hydrogen + (sulfur carrier)-H + 5'-deoxyadenosine + L-methionine + A + S-adenosyl-L-homocysteine + 2 H(+). Its function is as follows. Catalyzes the methylthiolation of an aspartic acid residue of ribosomal protein uS12. This is Ribosomal protein uS12 methylthiotransferase RimO from Legionella pneumophila subsp. pneumophila (strain Philadelphia 1 / ATCC 33152 / DSM 7513).